Here is a 719-residue protein sequence, read N- to C-terminus: Probable phosphatidylinositol phosphate kinase DDB_G0267588 (719 aa).

The segment at 47 to 261 (VFSPIPPPPS…SDSPNRVRLN (215 aa)) is disordered. 2 stretches are compositionally biased toward low complexity: residues 57-77 (TTDNTTNTTTTTIETTATDNT) and 87-104 (IENNNNNNNSSISSPNSI). Positions 107–129 (ANKKDSIELEEDKEHSIKRKDGS) are enriched in basic and acidic residues. The segment covering 172 to 184 (FDATNDNHNPQEV) has biased composition (polar residues). Low complexity predominate over residues 199 to 217 (TTTTTTTTTTTTSTNSTSN). Polar residues-rich tracts occupy residues 218-228 (KLPNNGDNTVS) and 248-261 (ASGSSDSPNRVRLN). Thr262 carries the phosphothreonine modification. The region spanning 316-718 (NAVGKSMGTE…RFQEFLSTII (403 aa)) is the PIPK domain. The segment at 579–638 (RENEPPSPSLLRSTLEDSSDFESPSMEQSSAGQQQQQRGSGNYDNSGAGRDSTTGGAAPK) is disordered. Low complexity predominate over residues 606-619 (QSSAGQQQQQRGSG).

Post-translationally, phosphorylated at Thr-262 by pkgB.

In terms of biological role, may be involved in signaling events that underlie chemotaxis via the chemoattractant-mediated pkgB phosphorylation. The chain is Probable phosphatidylinositol phosphate kinase DDB_G0267588 from Dictyostelium discoideum (Social amoeba).